The chain runs to 752 residues: Lid2 complex component jmj3 (752 aa).

The 42-residue stretch at 34–75 (IPVVEPKISEFVDMESFIRRVERLGKKYGAIKVVRPSSVLNP) folds into the JmjN domain. In terms of domain architecture, JmjC spans 162 to 333 (YTNRPSIPFY…NYEFSNLRRL (172 aa)). Composition is skewed to polar residues over residues 391–402 (SFSQRDFDSPNS) and 409–423 (LMSNHESASTEHFNS). The interval 391 to 438 (SFSQRDFDSPNSINPPSPLMSNHESASTEHFNSTTTTEKELSSLHVGE) is disordered. Residues 427–438 (TEKELSSLHVGE) show a composition bias toward basic and acidic residues.

Component of the Lid2 complex composed of ash2, jmj3, lid2, sdc1 and snt2.

Its subcellular location is the nucleus. The chain is Lid2 complex component jmj3 from Schizosaccharomyces pombe (strain 972 / ATCC 24843) (Fission yeast).